Reading from the N-terminus, the 353-residue chain is Protein RecA (353 aa).

ATP is bound at residue 64-71 (GPESSGKT). The segment at 331-353 (LEEASAQKEEVPVEDKLFDDELE) is disordered. Positions 335-346 (SAQKEEVPVEDK) are enriched in basic and acidic residues.

It belongs to the RecA family.

It is found in the cytoplasm. In terms of biological role, can catalyze the hydrolysis of ATP in the presence of single-stranded DNA, the ATP-dependent uptake of single-stranded DNA by duplex DNA, and the ATP-dependent hybridization of homologous single-stranded DNAs. It interacts with LexA causing its activation and leading to its autocatalytic cleavage. The protein is Protein RecA of Macrococcus caseolyticus (strain JCSC5402) (Macrococcoides caseolyticum).